We begin with the raw amino-acid sequence, 427 residues long: Histidine--tRNA ligase (427 aa).

The protein belongs to the class-II aminoacyl-tRNA synthetase family. Homodimer.

The protein resides in the cytoplasm. The enzyme catalyses tRNA(His) + L-histidine + ATP = L-histidyl-tRNA(His) + AMP + diphosphate + H(+). In Mycobacterium leprae (strain TN), this protein is Histidine--tRNA ligase (hisS).